The following is a 485-amino-acid chain: Bifunctional protein GlmU (485 aa).

The tract at residues 1 to 241 (MSASDFSSAV…ARELAGVNDR (241 aa)) is pyrophosphorylase. Residues 13 to 16 (LAAG), K27, Q84, and 89 to 90 (GT) contribute to the UDP-N-acetyl-alpha-D-glucosamine site. A Mg(2+)-binding site is contributed by D114. UDP-N-acetyl-alpha-D-glucosamine-binding residues include G151, E166, N181, and N239. N239 serves as a coordination point for Mg(2+). Residues 242–262 (VQLAEAGAELNRRTVIAAMRG) form a linker region. An N-acetyltransferase region spans residues 263-485 (GATIVDPATT…AAQNVHNQEG (223 aa)). The UDP-N-acetyl-alpha-D-glucosamine site is built by R344 and K362. H374 serves as the catalytic Proton acceptor. UDP-N-acetyl-alpha-D-glucosamine is bound by residues Y377 and N388. Acetyl-CoA contacts are provided by residues A391, 397 to 398 (NY), S416, and A434. The tract at residues 465–485 (RPGTAAAQAAEAAQNVHNQEG) is disordered. Residues 469-478 (AAAQAAEAAQ) are compositionally biased toward low complexity.

The protein in the N-terminal section; belongs to the N-acetylglucosamine-1-phosphate uridyltransferase family. This sequence in the C-terminal section; belongs to the transferase hexapeptide repeat family. Homotrimer. Mg(2+) serves as cofactor.

The protein resides in the cytoplasm. It carries out the reaction alpha-D-glucosamine 1-phosphate + acetyl-CoA = N-acetyl-alpha-D-glucosamine 1-phosphate + CoA + H(+). The enzyme catalyses N-acetyl-alpha-D-glucosamine 1-phosphate + UTP + H(+) = UDP-N-acetyl-alpha-D-glucosamine + diphosphate. It participates in nucleotide-sugar biosynthesis; UDP-N-acetyl-alpha-D-glucosamine biosynthesis; N-acetyl-alpha-D-glucosamine 1-phosphate from alpha-D-glucosamine 6-phosphate (route II): step 2/2. Its pathway is nucleotide-sugar biosynthesis; UDP-N-acetyl-alpha-D-glucosamine biosynthesis; UDP-N-acetyl-alpha-D-glucosamine from N-acetyl-alpha-D-glucosamine 1-phosphate: step 1/1. It functions in the pathway bacterial outer membrane biogenesis; LPS lipid A biosynthesis. Its function is as follows. Catalyzes the last two sequential reactions in the de novo biosynthetic pathway for UDP-N-acetylglucosamine (UDP-GlcNAc). The C-terminal domain catalyzes the transfer of acetyl group from acetyl coenzyme A to glucosamine-1-phosphate (GlcN-1-P) to produce N-acetylglucosamine-1-phosphate (GlcNAc-1-P), which is converted into UDP-GlcNAc by the transfer of uridine 5-monophosphate (from uridine 5-triphosphate), a reaction catalyzed by the N-terminal domain. The polypeptide is Bifunctional protein GlmU (Corynebacterium glutamicum (strain R)).